Consider the following 1084-residue polypeptide: Histone deacetylase 4 (1084 aa).

A coiled-coil region spans residues 67–177; that stretch reads REQQLQQELL…STEVKMKLQE (111 aa). Residues 118–313 are interaction with MEF2A; that stretch reads MLAMKHQQEL…NNSSGSVSAE (196 aa). Over residues 133 to 163 the composition is skewed to basic and acidic residues; that stretch reads KLERHRQEQELEKQHREQKLQQLKNKEKGKE. Disordered regions lie at residues 133–166, 206–226, and 240–315; these read KLER…ESAV, TQHS…TSYN, and PLRK…AENG. Serine 210 carries the post-translational modification Phosphoserine. Serine 246 carries the post-translational modification Phosphoserine; by CaMK4 and SIK1. Over residues 259–274 the composition is skewed to basic and acidic residues; sequence KVAERRSSPLLRRKDG. The segment covering 290-312 has biased composition (low complexity); it reads SACSSAPGSGPSSPNNSSGSVSA. Positions 349 to 354 match the PxLPxI/L motif; mediates interaction with ANKRA2 and 14-3-3 proteins motif; sequence PSLPNI. Position 350 is a phosphoserine (serine 350). At serine 467 the chain carries Phosphoserine; by CaMK4 and SIK1. 3 disordered regions span residues 509 to 531, 548 to 585, and 626 to 646; these read PKPS…ELRE, KEAH…QPSE, and PLSR…VQEP. A compositionally biased stretch (basic and acidic residues) spans 516-531; the sequence is RQPESHPEETEEELRE. A Glycyl lysine isopeptide (Lys-Gly) (interchain with G-Cter in SUMO) cross-link involves residue lysine 559. Phosphoserine is present on serine 565. Positions 629–641 are enriched in polar residues; it reads RAQSSPASATFPV. Serine 632 is subject to Phosphoserine; by CaMK4. Serine 633 is subject to Phosphoserine. The segment at 655-1084 is histone deacetylase; sequence GLVYDTLMLK…EEPMEEEPPL (430 aa). Residues cysteine 667, cysteine 669, histidine 675, and cysteine 751 each contribute to the Zn(2+) site. Residue histidine 803 is part of the active site. The Nuclear export signal signature appears at 1051-1084; sequence EEAETVTAMASLSVGVKPAEKRPDEEPMEEEPPL. The interval 1061–1084 is disordered; sequence SLSVGVKPAEKRPDEEPMEEEPPL.

The protein belongs to the histone deacetylase family. HD type 2 subfamily. As to quaternary structure, homodimer. Homodimerization via its N-terminal domain. Interacts with MEF2A. Interacts with MEF2C and MEF2D. Interacts with AHRR. Interacts with NR2C1. Interacts with HDAC7. Interacts with a 14-3-3 chaperone proteins in a phosphorylation dependent manner. Interacts with 14-3-3 protein YWHAB. Interacts with BTBD14B. Interacts with KDM5B. Interacts with MYOCD. Interacts with MORC2. Interacts (via PxLPxI/L motif) with ANKRA2 (via ankyrin repeats). Interacts with CUL7 (as part of the 3M complex); negatively regulated by ANKRA2. Interacts with EP300 in the presence of TFAP2C. Interacts with HSPA1A and HSPA1B leading to their deacetylation at 'Lys-77'. Interacts with ZBTB7B; the interaction allows the recruitment of HDAC4 on CD8 loci for deacetylation and possible inhibition of CD8 genes expression. Interacts with DHX36. Interacts with SIK3; this interaction leads to HDAC4 retention in the cytoplasm. Interacts with ZNF638. Post-translationally, phosphorylated by CaMK4 at Ser-246, Ser-467 and Ser-632. Phosphorylation at other residues by CaMK2D is required for the interaction with 14-3-3. Phosphorylation at Ser-350, within the PxLPxI/L motif, impairs the binding of ANKRA2 but generates a high-affinity docking site for 14-3-3. Sumoylation on Lys-559 is promoted by the E3 SUMO-protein ligase RANBP2, and prevented by phosphorylation by CaMK4. Ubiquitous.

It is found in the nucleus. The protein resides in the cytoplasm. The catalysed reaction is N(6)-acetyl-L-lysyl-[histone] + H2O = L-lysyl-[histone] + acetate. Its function is as follows. Responsible for the deacetylation of lysine residues on the N-terminal part of the core histones (H2A, H2B, H3 and H4). Histone deacetylation gives a tag for epigenetic repression and plays an important role in transcriptional regulation, cell cycle progression and developmental events. Histone deacetylases act via the formation of large multiprotein complexes. Involved in muscle maturation via its interaction with the myocyte enhancer factors such as MEF2A, MEF2C and MEF2D. Involved in the MTA1-mediated epigenetic regulation of ESR1 expression in breast cancer. Deacetylates HSPA1A and HSPA1B at 'Lys-77' leading to their preferential binding to co-chaperone STUB1. This is Histone deacetylase 4 from Homo sapiens (Human).